The chain runs to 326 residues: Probable cell division protein WhiA (326 aa).

Residues 275–308 (SLDELGRLADPPMTKDAIAGRIRRLLAMADKRAL) constitute a DNA-binding region (H-T-H motif).

It belongs to the WhiA family.

Functionally, involved in cell division and chromosome segregation. This chain is Probable cell division protein WhiA, found in Paenarthrobacter aurescens (strain TC1).